A 620-amino-acid polypeptide reads, in one-letter code: Chaperone protein HscA homolog (620 aa).

This sequence belongs to the heat shock protein 70 family.

Its function is as follows. Chaperone involved in the maturation of iron-sulfur cluster-containing proteins. Has a low intrinsic ATPase activity which is markedly stimulated by HscB. The sequence is that of Chaperone protein HscA homolog from Pseudomonas entomophila (strain L48).